The primary structure comprises 239 residues: Tungstate uptake system permease protein TupB (239 aa).

The 197-residue stretch at 37-233 (IKTTLLSSSI…LIAFCLNFIT (197 aa)) folds into the ABC transmembrane type-1 domain. Transmembrane regions (helical) follow at residues 45-65 (SISI…LGFF), 76-96 (IVDT…YALI), 114-134 (LILG…SNLI), 168-188 (ISVV…AMIV), and 212-232 (FASG…LNFI).

This sequence belongs to the binding-protein-dependent transport system permease family. The complex is composed of two ATP-binding proteins (TupC), two transmembrane proteins (TupB) and a solute-binding protein (TupA).

The protein localises to the cell inner membrane. Its function is as follows. Part of an ABC transporter complex involved in ultra-high affinity tungstate uptake. Probably responsible for the translocation of the substrate across the membrane. This chain is Tungstate uptake system permease protein TupB, found in Campylobacter jejuni subsp. jejuni serotype O:2 (strain ATCC 700819 / NCTC 11168).